The chain runs to 436 residues: Testican-3 (436 aa).

Positions 1 to 21 (MLKVSAVLCVCAAAWCSQSLA) are cleaved as a signal peptide. 8 cysteine pairs are disulfide-bonded: cysteine 90-cysteine 101, cysteine 95-cysteine 111, cysteine 139-cysteine 169, cysteine 142-cysteine 162, cysteine 151-cysteine 183, cysteine 317-cysteine 341, cysteine 352-cysteine 359, and cysteine 361-cysteine 380. The region spanning 133 to 185 (GPILSTCKQCPVVYPSPVCGSDGHTYSFQCKLEYQACVLGKQISVKCEGHCPC) is the Kazal-like domain. Residues 314-380 (DPPCQTELSN…GSRINGVADC (67 aa)) form the Thyroglobulin type-1 domain. O-linked (Xyl...) (glycosaminoglycan) serine glycans are attached at residues serine 387 and serine 392. Residues 393–436 (GDFHEWTDDEDDEDDIMNDEDEIEDDDEDEGDDDDGGDDHDVYI) form a disordered region. Residues 399 to 430 (TDDEDDEDDIMNDEDEIEDDDEDEGDDDDGGD) are compositionally biased toward acidic residues.

In terms of processing, contains chondroitin sulfate and heparan sulfate O-linked oligosaccharides. Expressed in brain.

The protein resides in the secreted. It is found in the extracellular space. It localises to the extracellular matrix. In terms of biological role, may participate in diverse steps of neurogenesis. Inhibits the processing of pro-matrix metalloproteinase 2 (MMP-2) by MT1-MMP and MT3-MMP. May interfere with tumor invasion. In Homo sapiens (Human), this protein is Testican-3 (SPOCK3).